The primary structure comprises 226 residues: UPF0758 protein M6_Spy0838 (226 aa).

The MPN domain occupies 103–225 (SVLTSVQVAE…YYSFREKSTL (123 aa)). Positions 174, 176, and 187 each coordinate Zn(2+). The short motif at 174–187 (HNHPSGNIEPSSND) is the JAMM motif element.

It belongs to the UPF0758 family.

The chain is UPF0758 protein M6_Spy0838 from Streptococcus pyogenes serotype M6 (strain ATCC BAA-946 / MGAS10394).